A 292-amino-acid chain; its full sequence is NAD kinase (292 aa).

D73 functions as the Proton acceptor in the catalytic mechanism. NAD(+) is bound by residues 73 to 74, 147 to 148, H158, R175, D177, 188 to 193, and Q247; these read DG, NE, and TAYSLS.

Belongs to the NAD kinase family. The cofactor is a divalent metal cation.

It is found in the cytoplasm. The enzyme catalyses NAD(+) + ATP = ADP + NADP(+) + H(+). Its function is as follows. Involved in the regulation of the intracellular balance of NAD and NADP, and is a key enzyme in the biosynthesis of NADP. Catalyzes specifically the phosphorylation on 2'-hydroxyl of the adenosine moiety of NAD to yield NADP. The protein is NAD kinase of Escherichia coli O7:K1 (strain IAI39 / ExPEC).